A 958-amino-acid chain; its full sequence is UvrABC system protein A (958 aa).

An ABC transporter 1 domain is found at 1 to 232 (MQSKSIKIQG…IETALKLGEG (232 aa)). Position 33–40 (33–40 (GLSGSGKS)) interacts with ATP. A C4-type zinc finger spans residues 252–279 (CPICGFSIGELEPRLFSFNSPFGACPSC). ABC transporter domains lie at 315–593 (QYYP…KYLS) and 604–935 (RRKP…GKYL). ATP is bound at residue 639–646 (GVSGSGKS). The segment at 738–764 (CEACRGDGILKIEMHFLPDVYVPCEVC) adopts a C4-type zinc-finger fold.

It belongs to the ABC transporter superfamily. UvrA family. Forms a heterotetramer with UvrB during the search for lesions.

It localises to the cytoplasm. Its function is as follows. The UvrABC repair system catalyzes the recognition and processing of DNA lesions. UvrA is an ATPase and a DNA-binding protein. A damage recognition complex composed of 2 UvrA and 2 UvrB subunits scans DNA for abnormalities. When the presence of a lesion has been verified by UvrB, the UvrA molecules dissociate. This Oceanobacillus iheyensis (strain DSM 14371 / CIP 107618 / JCM 11309 / KCTC 3954 / HTE831) protein is UvrABC system protein A.